A 314-amino-acid polypeptide reads, in one-letter code: Olfactory receptor 8D4 (314 aa).

The Extracellular portion of the chain corresponds to 1-25 (MGVKNHSTVTEFLLSGLTEQAELQL). A glycan (N-linked (GlcNAc...) asparagine) is linked at N5. A helical transmembrane segment spans residues 26 to 46 (PLFCLFLGIYTVTVVGNLSMI). Residues 47–54 (SIIRLNRQ) lie on the Cytoplasmic side of the membrane. Residues 55 to 75 (LHTPMYYFLSSLSFLDFCYSS) traverse the membrane as a helical segment. The Extracellular segment spans residues 76-99 (VITPKMLSGFLCRDRSISYSGCMI). C97 and C189 are joined by a disulfide. The chain crosses the membrane as a helical span at residues 100 to 120 (QLFFFCVCVISECYMLAAMAC). Topologically, residues 121–139 (DRYVAICSPLLYRVIMSPR) are cytoplasmic. Residues 140 to 160 (VCSLLVAAVFSVGFTDAVIHG) form a helical membrane-spanning segment. At 161-197 (GCILRLSFCGSNIIKHYFCDIVPLIKLSCSSTYIDEL) the chain is on the extracellular side. Residues 198–217 (LIFVIGGFNMVATSLTIIIS) traverse the membrane as a helical segment. The Cytoplasmic portion of the chain corresponds to 218 to 237 (YAFILTSILRIHSKKGRCKA). The chain crosses the membrane as a helical span at residues 238 to 258 (FSTCSSHLTAVLMFYGSLMSM). At 259-271 (YLKPASSSSLTQE) the chain is on the extracellular side. The helical transmembrane segment at 272–292 (KVSSVFYTTVILMLNPLIYSL) threads the bilayer. At 293 to 314 (RNNEVRNALMKLLRRKISLSPG) the chain is on the cytoplasmic side.

It belongs to the G-protein coupled receptor 1 family.

It localises to the cell membrane. In terms of biological role, odorant receptor. This chain is Olfactory receptor 8D4 (OR8D4), found in Homo sapiens (Human).